The sequence spans 144 residues: Fluoride-specific ion channel FluC (144 aa).

The next 4 helical transmembrane spans lie at 7–27 (LIVM…SVAA), 33–53 (FIPW…IGFF), 71–91 (LFVM…SLQT), and 105–125 (VNVA…HITA). Glycine 79 and threonine 82 together coordinate Na(+).

It belongs to the fluoride channel Fluc/FEX (TC 1.A.43) family.

It is found in the cell inner membrane. The enzyme catalyses fluoride(in) = fluoride(out). Its activity is regulated as follows. Na(+) is not transported, but it plays an essential structural role and its presence is essential for fluoride channel function. Functionally, fluoride-specific ion channel. Important for reducing fluoride concentration in the cell, thus reducing its toxicity. The chain is Fluoride-specific ion channel FluC from Gluconobacter oxydans (strain 621H) (Gluconobacter suboxydans).